Consider the following 459-residue polypeptide: Cysteine--tRNA ligase (459 aa).

Position 29 (Cys-29) interacts with Zn(2+). A 'HIGH' region motif is present at residues 31–41; the sequence is PTVYNLVHIGN. Zn(2+)-binding residues include Cys-209, His-234, and Glu-238. A 'KMSKS' region motif is present at residues 267 to 271; that stretch reads KMSKS. Lys-270 is an ATP binding site.

Belongs to the class-I aminoacyl-tRNA synthetase family. Monomer. The cofactor is Zn(2+).

The protein resides in the cytoplasm. The catalysed reaction is tRNA(Cys) + L-cysteine + ATP = L-cysteinyl-tRNA(Cys) + AMP + diphosphate. This Saccharophagus degradans (strain 2-40 / ATCC 43961 / DSM 17024) protein is Cysteine--tRNA ligase.